The sequence spans 413 residues: Ribulose bisphosphate carboxylase/oxygenase activase, chloroplastic (413 aa).

Residues 1–54 (MAATVSTIGAVNRTTLNNSNYGGLVPNSAFLGSRLKVSSRFTTSKMVTGNFKIV) constitute a chloroplast transit peptide. An ATP-binding site is contributed by 162–169 (GGKGQGKS).

Belongs to the RuBisCO activase family.

The protein resides in the plastid. Its subcellular location is the chloroplast stroma. Activation of RuBisCO (ribulose-1,5-bisphosphate carboxylase/oxygenase; EC 4.1.1.39) involves the ATP-dependent carboxylation of the epsilon-amino group of lysine leading to a carbamate structure. The sequence is that of Ribulose bisphosphate carboxylase/oxygenase activase, chloroplastic from Cucumis sativus (Cucumber).